Reading from the N-terminus, the 941-residue chain is UvrABC system protein A (941 aa).

37–44 (GLSGSGKS) lines the ATP pocket. The segment at 260–287 (CFKCKMSFEELEPLSFSFNSPKGACESC) adopts a C4-type zinc-finger fold. ABC transporter domains lie at 316–585 (IFGY…NNHS) and 605–937 (KEKH…KFLA). 637–644 (GVSGSGKS) lines the ATP pocket. The C4-type zinc-finger motif lies at 737–763 (CEKCQGDGDIKIEMHFLPDVLVQCDSC).

The protein belongs to the ABC transporter superfamily. UvrA family. As to quaternary structure, forms a heterotetramer with UvrB during the search for lesions.

It is found in the cytoplasm. In terms of biological role, the UvrABC repair system catalyzes the recognition and processing of DNA lesions. UvrA is an ATPase and a DNA-binding protein. A damage recognition complex composed of 2 UvrA and 2 UvrB subunits scans DNA for abnormalities. When the presence of a lesion has been verified by UvrB, the UvrA molecules dissociate. This is UvrABC system protein A from Helicobacter pylori (strain J99 / ATCC 700824) (Campylobacter pylori J99).